A 329-amino-acid chain; its full sequence is Phosphate acyltransferase (329 aa).

This sequence belongs to the PlsX family. Homodimer. Probably interacts with PlsY.

The protein localises to the cytoplasm. The catalysed reaction is a fatty acyl-[ACP] + phosphate = an acyl phosphate + holo-[ACP]. The protein operates within lipid metabolism; phospholipid metabolism. In terms of biological role, catalyzes the reversible formation of acyl-phosphate (acyl-PO(4)) from acyl-[acyl-carrier-protein] (acyl-ACP). This enzyme utilizes acyl-ACP as fatty acyl donor, but not acyl-CoA. This chain is Phosphate acyltransferase, found in Anoxybacillus flavithermus (strain DSM 21510 / WK1).